We begin with the raw amino-acid sequence, 176 residues long: Small ribosomal subunit protein uS4 (176 aa).

Positions Arg103–Leu165 constitute an S4 RNA-binding domain.

Belongs to the universal ribosomal protein uS4 family. Part of the 30S ribosomal subunit. Contacts protein S5. The interaction surface between S4 and S5 is involved in control of translational fidelity.

Functionally, one of the primary rRNA binding proteins, it binds directly to 16S rRNA where it nucleates assembly of the body of the 30S subunit. Its function is as follows. With S5 and S12 plays an important role in translational accuracy. In Hyperthermus butylicus (strain DSM 5456 / JCM 9403 / PLM1-5), this protein is Small ribosomal subunit protein uS4.